The following is an 89-amino-acid chain: Small ribosomal subunit protein uS14A (89 aa).

The protein belongs to the universal ribosomal protein uS14 family. Part of the 30S ribosomal subunit. Contacts proteins S3 and S10.

Its function is as follows. Binds 16S rRNA, required for the assembly of 30S particles and may also be responsible for determining the conformation of the 16S rRNA at the A site. This is Small ribosomal subunit protein uS14A from Staphylococcus aureus (strain Newman).